The primary structure comprises 316 residues: Olfactory receptor 2AG2 (316 aa).

Residues 1 to 30 (MELRNSTLGSGFILVGILNDSGSPELLYAT) are Extracellular-facing. 2 N-linked (GlcNAc...) asparagine glycosylation sites follow: Asn-5 and Asn-19. A helical membrane pass occupies residues 31–51 (FTILYMLALTSNGLLLLAITI). At 52–56 (EARLH) the chain is on the cytoplasmic side. A helical transmembrane segment spans residues 57-77 (MPMYLLLGQLSLMDLLFTSVV). Residues 78-97 (TPKALADFLRRENTISFGGC) are Extracellular-facing. A disulfide bond links Cys-97 and Cys-179. Residues 98 to 118 (ALQMFLALTMGSAEDLLLAFM) form a helical membrane-spanning segment. At 119 to 139 (AYDRYVAICHPLKYMTLMSPR) the chain is on the cytoplasmic side. Residues 140–160 (VCWIMVATSWILASLIAIGHT) form a helical membrane-spanning segment. The Extracellular portion of the chain corresponds to 161-205 (MYTMHLPFCVSWEIRHLLCEIPPLLKLACADTSRYELIIYVTGVT). A helical transmembrane segment spans residues 206–226 (FLLLPISAIVASYTLVLFTVL). Residues 227-244 (RMPSNEGRKKALVTCSSH) lie on the Cytoplasmic side of the membrane. A helical transmembrane segment spans residues 245-265 (LIVVGMFYGAATFMYVLPSSF). Topologically, residues 266–271 (HSPKQD) are extracellular. Residues 272 to 292 (NIISVFYTIVTPALNPLIYSL) traverse the membrane as a helical segment. At 293–316 (RNKEVMRALRRVLGKYILLAHSTL) the chain is on the cytoplasmic side.

The protein belongs to the G-protein coupled receptor 1 family.

It is found in the cell membrane. In terms of biological role, odorant receptor. This is Olfactory receptor 2AG2 (OR2AG2) from Homo sapiens (Human).